Reading from the N-terminus, the 118-residue chain is Thioredoxin-like protein CXXS1 (118 aa).

Residues 2-110 (ARVVKIDSAE…IKKRVDGFVQ (109 aa)) form the Thioredoxin domain.

It belongs to the thioredoxin family. Ubiquitous.

It is found in the cytoplasm. In terms of biological role, possesses low disulfide reductase activity, but efficient protein disulfide isomerase activity. Does not possess deglutathionylation activity. This is Thioredoxin-like protein CXXS1 (CXXS1) from Arabidopsis thaliana (Mouse-ear cress).